Here is a 311-residue protein sequence, read N- to C-terminus: Protein nfe2 (311 aa).

Its function is as follows. Responsible for the nodulation efficiency and competitive ability of strain GR4 on alfalfa roots. The polypeptide is Protein nfe2 (nfe2) (Rhizobium meliloti (Ensifer meliloti)).